We begin with the raw amino-acid sequence, 85 residues long: Polcalcin Bet v 4 (85 aa).

EF-hand domains follow at residues 7-42 (QDKA…LGSI) and 42-77 (ITPD…NRGL). Ca(2+) contacts are provided by Asp-20, Asn-22, Asp-24, Lys-26, Glu-31, Asp-55, Asp-57, Asp-59, and Glu-66.

As to quaternary structure, monomer.

This chain is Polcalcin Bet v 4 (BETV4), found in Betula pendula (European white birch).